The sequence spans 99 residues: Acylphosphatase-2 (99 aa).

S2 is modified (N-acetylserine). Positions 9-99 (SVDYEVFGRV…LEYSNFSIRY (91 aa)) constitute an Acylphosphatase-like domain. Active-site residues include R24 and N42. At S93 the chain carries Phosphoserine.

Belongs to the acylphosphatase family.

It catalyses the reaction an acyl phosphate + H2O = a carboxylate + phosphate + H(+). In terms of biological role, its physiological role is not yet clear. This chain is Acylphosphatase-2 (ACYP2), found in Cavia porcellus (Guinea pig).